The sequence spans 215 residues: UPF0502 protein YceH (215 aa).

The protein belongs to the UPF0502 family.

This is UPF0502 protein YceH from Salmonella arizonae (strain ATCC BAA-731 / CDC346-86 / RSK2980).